The primary structure comprises 387 residues: Formate-dependent phosphoribosylglycinamide formyltransferase (387 aa).

N(1)-(5-phospho-beta-D-ribosyl)glycinamide contacts are provided by residues 21-22 (EL) and Glu-81. ATP is bound by residues Arg-113, Lys-154, 159 to 164 (SSGHGQ), 193 to 196 (EEFV), and Glu-201. An ATP-grasp domain is found at 118-306 (VFAAETLDLK…EFALHVRAVL (189 aa)). Positions 265 and 277 each coordinate Mg(2+). Residues Asp-284, Lys-352, and 359-360 (RR) each bind N(1)-(5-phospho-beta-D-ribosyl)glycinamide.

It belongs to the PurK/PurT family. In terms of assembly, homodimer.

The catalysed reaction is N(1)-(5-phospho-beta-D-ribosyl)glycinamide + formate + ATP = N(2)-formyl-N(1)-(5-phospho-beta-D-ribosyl)glycinamide + ADP + phosphate + H(+). Its pathway is purine metabolism; IMP biosynthesis via de novo pathway; N(2)-formyl-N(1)-(5-phospho-D-ribosyl)glycinamide from N(1)-(5-phospho-D-ribosyl)glycinamide (formate route): step 1/1. Involved in the de novo purine biosynthesis. Catalyzes the transfer of formate to 5-phospho-ribosyl-glycinamide (GAR), producing 5-phospho-ribosyl-N-formylglycinamide (FGAR). Formate is provided by PurU via hydrolysis of 10-formyl-tetrahydrofolate. The sequence is that of Formate-dependent phosphoribosylglycinamide formyltransferase from Sulfurovum sp. (strain NBC37-1).